We begin with the raw amino-acid sequence, 453 residues long: Homeobox protein meis3 (453 aa).

The interval 33-64 (HHSLSQSAPYGSTGAAHRVPMPPGMGSNDGLK) is disordered. The 84-residue stretch at 102–185 (GGDVCSSDSF…PIDLVIDDRD (84 aa)) folds into the MEIS N-terminal domain. The interval 192 to 272 (LEDFTGSCTS…RDKKRNKKRG (81 aa)) is disordered. A compositionally biased stretch (polar residues) spans 197–209 (GSCTSLSDQNNSW). Over residues 218–230 (STHSGTPGPSSGG) the composition is skewed to low complexity. Positions 231–242 (LASQSGDNSSEQ) are enriched in polar residues. A DNA-binding region (homeobox) is located at residues 267–329 (RNKKRGIFPK…NARRRIVQPM (63 aa)).

This sequence belongs to the TALE/MEIS homeobox family.

It localises to the nucleus. Its function is as follows. A caudalizing protein which is required to pattern the anterior/posterior (A/P) axis during central nervous system (CNS) formation. Inhibits anterior neural expression and acts as a transcriptional activator to induce posterior neural gene expression. Maintains a proper A/P balance required for hindbrain formation by activating the FGF/MAPK pathway, which modulates the planar cell polarity (PCP) pathway. Interacts with retinoid signaling during hindbrain patterning. In Xenopus tropicalis (Western clawed frog), this protein is Homeobox protein meis3.